Reading from the N-terminus, the 28-residue chain is Ranatuerin-2SEc (28 aa).

The cysteines at positions 23 and 28 are disulfide-linked.

In terms of tissue distribution, expressed by the skin glands.

The protein localises to the secreted. Functionally, mast cell degranulating peptide. Causes histamine release from rat peritoneal mast cells in vitro. Has antibacterial activity against the Gram-negative bacterium E.coli K12 and Gram-positive bacterium M.luteus NCT C2665. The polypeptide is Ranatuerin-2SEc (Lithobates sevosus (Dusky gopher frog)).